We begin with the raw amino-acid sequence, 293 residues long: uncharacterized protein (293 aa).

The 60-residue stretch at 1 to 60 (MHITLRQLEVFAEVLKSGSTTQASVMLALSQSAVSAALTDLEGQLGVQLFDRVGKRLVVN) folds into the HTH lysR-type domain. The H-T-H motif DNA-binding region spans 20-39 (TTQASVMLALSQSAVSAALT).

This sequence belongs to the LysR transcriptional regulatory family.

This is an uncharacterized protein from Escherichia coli O157:H7.